The sequence spans 104 residues: Large ribosomal subunit protein uL24 (104 aa).

Belongs to the universal ribosomal protein uL24 family. In terms of assembly, part of the 50S ribosomal subunit.

One of two assembly initiator proteins, it binds directly to the 5'-end of the 23S rRNA, where it nucleates assembly of the 50S subunit. Its function is as follows. One of the proteins that surrounds the polypeptide exit tunnel on the outside of the subunit. This Bradyrhizobium sp. (strain BTAi1 / ATCC BAA-1182) protein is Large ribosomal subunit protein uL24.